Consider the following 59-residue polypeptide: Large ribosomal subunit protein uL30 (59 aa).

This sequence belongs to the universal ribosomal protein uL30 family. In terms of assembly, part of the 50S ribosomal subunit.

This Ectopseudomonas mendocina (strain ymp) (Pseudomonas mendocina) protein is Large ribosomal subunit protein uL30.